A 643-amino-acid polypeptide reads, in one-letter code: Extracellular metalloproteinase 4 (643 aa).

Positions 1 to 18 are cleaved as a signal peptide; sequence MHGLMLAGLLALPLSVLG. Positions 19–254 are excised as a propeptide; the sequence is HPTESHSSGI…VHSVVDYVSA (236 aa). Basic and acidic residues predominate over residues 47–57; that stretch reads TKSDAVPKQDG. The interval 47 to 73 is disordered; sequence TKSDAVPKQDGESFTTSSTGNDNSSSG. The span at 61–73 shows a compositional bias: low complexity; sequence TTSSTGNDNSSSG. Residues Asn271 and Asn420 are each glycosylated (N-linked (GlcNAc...) asparagine). His437 contacts Zn(2+). Glu438 is an active-site residue. His441 lines the Zn(2+) pocket. N-linked (GlcNAc...) asparagine glycans are attached at residues Asn603 and Asn629.

Belongs to the peptidase M36 family. The cofactor is Zn(2+).

It localises to the secreted. Its function is as follows. Secreted metalloproteinase probably acting as a virulence factor. In Trichophyton rubrum (Athlete's foot fungus), this protein is Extracellular metalloproteinase 4 (MEP4).